Reading from the N-terminus, the 156-residue chain is Deoxyuridine 5'-triphosphate nucleotidohydrolase (156 aa).

Substrate contacts are provided by residues 76–78, Asn-89, 93–95, and Lys-103; these read RSG and TVD.

The protein belongs to the dUTPase family. The cofactor is Mg(2+).

It carries out the reaction dUTP + H2O = dUMP + diphosphate + H(+). The protein operates within pyrimidine metabolism; dUMP biosynthesis; dUMP from dCTP (dUTP route): step 2/2. In terms of biological role, this enzyme is involved in nucleotide metabolism: it produces dUMP, the immediate precursor of thymidine nucleotides and it decreases the intracellular concentration of dUTP so that uracil cannot be incorporated into DNA. The sequence is that of Deoxyuridine 5'-triphosphate nucleotidohydrolase from Rhizobium leguminosarum bv. trifolii (strain WSM2304).